Reading from the N-terminus, the 61-residue chain is Large ribosomal subunit protein eL20 (61 aa).

It belongs to the eukaryotic ribosomal protein eL20 family. Part of the 50S ribosomal subunit. Binds 23S rRNA.

The protein is Large ribosomal subunit protein eL20 of Methanosarcina mazei (strain ATCC BAA-159 / DSM 3647 / Goe1 / Go1 / JCM 11833 / OCM 88) (Methanosarcina frisia).